The following is a 187-amino-acid chain: POM121 and ZP3 fusion protein (187 aa).

A disordered region spans residues 166 to 187; sequence GTPSHSRRQPRVVSQWSTSASL. Residues 177–187 show a composition bias toward polar residues; it reads VVSQWSTSASL.

As to expression, expressed in spleen, thymus, pancreas, testis, ovary, small intestine, colon and lymphocytes.

This is POM121 and ZP3 fusion protein (POMZP3) from Homo sapiens (Human).